Here is a 941-residue protein sequence, read N- to C-terminus: Probable respiratory burst oxidase homolog protein I (941 aa).

The Cytoplasmic portion of the chain corresponds to 1-374 (MSMSFSGGTH…LYSLQDNWKR (374 aa)). Disordered regions lie at residues 29 to 48 (PSLP…SGEE) and 103 to 166 (ERLT…SGTE). The span at 36 to 45 (SPSPSSSSSS) shows a compositional bias: low complexity. Over residues 103–117 (ERLTAGTNSKQQIQK) the composition is skewed to polar residues. 2 EF-hand-like regions span residues 196-204 (SKDGYLFKS) and 232-243 (RRIMVDKINLQE). The EF-hand domain occupies 254–289 (ESFDSRLQIFFNMVKNGDGRITENEVKEIIILSASA). Ca(2+) is bound by residues asparagine 269, aspartate 271, arginine 273, and glutamate 278. Phosphoserine occurs at positions 346 and 350. A helical membrane pass occupies residues 375–395 (IWVLTLWFVIMAWLFMWKCYQ). At 396 to 407 (YKHKDAFHVMGY) the chain is on the extracellular side. A helical membrane pass occupies residues 408–428 (CLVMAKGAAETLKFNMALILL). Residues 413-570 (KGAAETLKFN…LLLTVYVLLV (158 aa)) enclose the Ferric oxidoreductase domain. Topologically, residues 429-514 (PVCRNTITYL…YFGLVNTPVG (86 aa)) are cytoplasmic. Residues 515–535 (ITGIIMVAFMLIAFTLASRRC) traverse the membrane as a helical segment. The Extracellular portion of the chain corresponds to 536–557 (RRNLTKLPKPFDKLTGYNAFWY). A helical transmembrane segment spans residues 558–578 (SHHLLLTVYVLLVIHGVSLYL). The Cytoplasmic segment spans residues 579–586 (EHKWYRKT). A helical transmembrane segment spans residues 587–604 (VWMYLAVPVLLYVGERIF). Residues 605 to 731 (RFFRSRLYTV…PYGAPAQDHW (127 aa)) lie on the Extracellular side of the membrane. Residues 609-729 (SRLYTVEICK…DGPYGAPAQD (121 aa)) form the FAD-binding FR-type domain. Residues 732–752 (KYDVVLLVGLGIGATPFVSIL) form a helical membrane-spanning segment. Residues 753-941 (RDLLNNIIKQ…TRFDFHKEQF (189 aa)) lie on the Cytoplasmic side of the membrane.

This sequence belongs to the RBOH (TC 5.B.1.3) family. In terms of assembly, monomer and homodimer.

The protein localises to the membrane. Calcium-dependent NADPH oxidase that generates superoxide. This Arabidopsis thaliana (Mouse-ear cress) protein is Probable respiratory burst oxidase homolog protein I (RBOHI).